A 54-amino-acid chain; its full sequence is Large ribosomal subunit protein bL33 (54 aa).

It belongs to the bacterial ribosomal protein bL33 family.

This Frankia alni (strain DSM 45986 / CECT 9034 / ACN14a) protein is Large ribosomal subunit protein bL33.